The chain runs to 667 residues: Gamma-tubulin complex component 4 (667 aa).

The interval 424–446 is disordered; the sequence is DHKADATQPREVPSRETSPREAP.

Belongs to the TUBGCP family. In terms of assembly, component of the gamma-tubulin ring complex (gTuRC) consisting of TUBGCP2, TUBGCP3, TUBGCP4, TUBGCP5 and TUBGCP6 and gamma-tubulin TUBG1 or TUBG2. TUBGCP2, TUBGCP3, TUBGCP4, TUBGCP5 and TUBGCP6 assemble in a 5:5:2:1:1 stoichiometry; each is associated with a gamma-tubulin, thereby arranging 14 gamma-tubulins in a helical manner. Gamma-tubulin at the first position is blocked by TUBGCP3 at the last position, allowing 13 protafilaments to grow into a microtubule. The gTuRC (via TUBGCP3 and TUBGCP6) interacts with ACTB and MZT1; the interactions form a luminal bridge that stabilizes the initial structure during complex assembly. The gTuRC (via TUBGCP2) interacts with MZT2A/MZT2B and CDK5RAP2 (via CM1 motif); the interactions play a role in gTuRC activation. Interacts with NINL. Interacts with ATF5; the ATF5:PCNT:polyglutamylated tubulin (PGT) tripartite unites the mother centriole and the pericentriolar material (PCM) in the centrosome.

The protein localises to the cytoplasm. It is found in the cytoskeleton. The protein resides in the microtubule organizing center. Its subcellular location is the centrosome. In terms of biological role, component of the gamma-tubulin ring complex (gTuRC) which mediates microtubule nucleation. The gTuRC regulates the minus-end nucleation of alpha-beta tubulin heterodimers that grow into microtubule protafilaments, a critical step in centrosome duplication and spindle formation. This Mus musculus (Mouse) protein is Gamma-tubulin complex component 4 (Tubgcp4).